The chain runs to 523 residues: 2-isopropylmalate synthase (523 aa).

In terms of domain architecture, Pyruvate carboxyltransferase spans 5–267 (VIIFDTTLRD…HTAINHQEIW (263 aa)). Mn(2+) is bound by residues Asp-14, His-202, His-204, and Asn-238. The segment at 392–523 (RLDYFSVQSG…QHNENNKETV (132 aa)) is regulatory domain.

Belongs to the alpha-IPM synthase/homocitrate synthase family. LeuA type 1 subfamily. Homodimer. It depends on Mn(2+) as a cofactor.

It localises to the cytoplasm. It carries out the reaction 3-methyl-2-oxobutanoate + acetyl-CoA + H2O = (2S)-2-isopropylmalate + CoA + H(+). Its pathway is amino-acid biosynthesis; L-leucine biosynthesis; L-leucine from 3-methyl-2-oxobutanoate: step 1/4. Its function is as follows. Catalyzes the condensation of the acetyl group of acetyl-CoA with 3-methyl-2-oxobutanoate (2-ketoisovalerate) to form 3-carboxy-3-hydroxy-4-methylpentanoate (2-isopropylmalate). The protein is 2-isopropylmalate synthase of Shigella sonnei (strain Ss046).